The primary structure comprises 174 residues: MRYSVSLENVAKLYAHNLPISTKHAVEIAKMIRYLPLQLAKEMLQKVLDKELAVPFFRYNRDIPHRKKGQIHPYFKIKHGRFPENATKWILKELNSVEKNAINLGMDPNKLFIVHIAAHKGVRGYTSVYGRRARRKATHLEIMVAENKDYDPSKKYPLKELKRMGHKLFLSLKK.

The protein belongs to the universal ribosomal protein uL22 family. As to quaternary structure, part of the 50S ribosomal subunit.

This protein binds specifically to 23S rRNA. It makes multiple contacts with different domains of the 23S rRNA in the assembled 50S subunit and ribosome. Its function is as follows. The globular domain of the protein is located near the polypeptide exit tunnel on the outside of the subunit, while an extended beta-hairpin is found that lines the wall of the exit tunnel in the center of the 70S ribosome. The sequence is that of Large ribosomal subunit protein uL22 from Nanoarchaeum equitans (strain Kin4-M).